The sequence spans 426 residues: Enolase (426 aa).

Q163 provides a ligand contact to (2R)-2-phosphoglycerate. Catalysis depends on E205, which acts as the Proton donor. Mg(2+)-binding residues include D242, E286, and D313. Positions 338, 367, 368, and 389 each coordinate (2R)-2-phosphoglycerate. The active-site Proton acceptor is K338.

This sequence belongs to the enolase family. It depends on Mg(2+) as a cofactor.

The protein resides in the cytoplasm. It localises to the secreted. Its subcellular location is the cell surface. It carries out the reaction (2R)-2-phosphoglycerate = phosphoenolpyruvate + H2O. It functions in the pathway carbohydrate degradation; glycolysis; pyruvate from D-glyceraldehyde 3-phosphate: step 4/5. Functionally, catalyzes the reversible conversion of 2-phosphoglycerate (2-PG) into phosphoenolpyruvate (PEP). It is essential for the degradation of carbohydrates via glycolysis. The protein is Enolase of Syntrophobacter fumaroxidans (strain DSM 10017 / MPOB).